A 130-amino-acid chain; its full sequence is Cystatin (130 aa).

The N-terminal stretch at 1–19 (MEWKIVVPLLAVAFTVANA) is a signal peptide. The short motif at 67 to 71 (QVVSG) is the Secondary area of contact element. Disulfide bonds link Cys85-Cys94 and Cys108-Cys128.

The protein belongs to the cystatin family. As to expression, ubiquitous expression including brain, white muscle, heart, gill, kidney, spleen, liver and skin with the highest and lowest level in brain and gill, respectively.

The protein localises to the secreted. In terms of biological role, cysteine proteinase inhibitor. This is Cystatin from Oncorhynchus keta (Chum salmon).